Reading from the N-terminus, the 1023-residue chain is uncharacterized protein (1023 aa).

Positions 1-35 (MAEKRPLGPLGPMMYGKLPRLEPDPGPGHSLPLSA) are disordered. At Lys17 the chain carries N6-acetyllysine. Ser206 and Ser383 each carry phosphoserine. 5 disordered regions span residues 381–501 (GASP…PVID), 518–551 (PEPR…ASRS), 703–742 (PAPA…PEQH), 907–980 (EART…TLRA), and 1002–1023 (KASG…THHL). Thr389 carries the post-translational modification Phosphothreonine. Positions 391–400 (PSHSQNSVQP) are enriched in polar residues. Basic and acidic residues-rich tracts occupy residues 425 to 436 (RPAEKPTPEAQE), 443 to 454 (CRKEQLQPRPNE), and 477 to 490 (CAKE…KDAR). Residues Ser493 and Ser494 each carry the phosphoserine modification. Over residues 706–722 (ASAPPPSPAPAPAPASG) the composition is skewed to pro residues. Ser912, Ser964, and Ser972 each carry phosphoserine. The span at 963–972 (PSPSSGASTS) shows a compositional bias: low complexity.

This is an uncharacterized protein from Mus musculus (Mouse).